The following is a 461-amino-acid chain: Diacylglycerol O-acyltransferase 1 (461 aa).

The interval 1–38 is disordered; sequence MQDSMDDSLREAEGRQDDSEVSSGTTLGSSTPEDSGVT. The Cytoplasmic portion of the chain corresponds to 1–112; sequence MQDSMDDSLR…TLVVAWHTSS (112 aa). Positions 7 to 18 are enriched in basic and acidic residues; the sequence is DSLREAEGRQDD. The span at 21-33 shows a compositional bias: polar residues; that stretch reads VSSGTTLGSSTPE. The chain crosses the membrane as a helical span at residues 113–133; the sequence is FIYMTVLVLFLAANPLMWWFM. The Lumenal portion of the chain corresponds to 134–230; sequence VPYMVYYVWN…ARPQVATGPR (97 aa). Residues 231-251 form a helical membrane-spanning segment; the sequence is YIFGYHPHGVGALGAFGAIAT. The Cytoplasmic segment spans residues 252-258; that stretch reads EGCNWSK. Residues 259–279 traverse the membrane as a helical segment; sequence VFAGIPACLCTLVNQFQIPIY. Residues 280–332 lie on the Lumenal side of the membrane; it reads RDYLLGLGCTSVARKNVLKVLEQNYSVCIVVGGAQEALLSRVGSTELVLNKRK. A helical transmembrane segment spans residues 333–353; it reads GFIKLALETGNVNLVPIYAFG. Residues 354–461 are Cytoplasmic-facing; the sequence is ETDCFNVLDT…YAGKELKIVE (108 aa).

The protein belongs to the diacylglycerol acyltransferase family.

The protein resides in the lipid droplet. It is found in the endoplasmic reticulum membrane. The catalysed reaction is an acyl-CoA + a 1,2-diacyl-sn-glycerol = a triacyl-sn-glycerol + CoA. It carries out the reaction a 2-acylglycerol + an acyl-CoA = a 1,2-diacyl-sn-glycerol + CoA. It functions in the pathway glycerolipid metabolism; triacylglycerol biosynthesis. Functionally, catalyzes the terminal and only committed step in triacylglycerol (TAG) synthesis by using diacylglycerol (DAG) and fatty acyl-CoA as substrates. Required for storage lipid synthesis. Major DAG esterifying enzyme in stationary phase when TAG production is particularly active. Involved in lipid particle synthesis from the endoplasmic reticulum, promoting localized TAG production at discrete ER subdomains. The protein is Diacylglycerol O-acyltransferase 1 (DGA1) of Eremothecium gossypii (strain ATCC 10895 / CBS 109.51 / FGSC 9923 / NRRL Y-1056) (Yeast).